Reading from the N-terminus, the 155-residue chain is UPF0305 protein MTH_811 (155 aa).

It belongs to the UPF0305 family.

The sequence is that of UPF0305 protein MTH_811 from Methanothermobacter thermautotrophicus (strain ATCC 29096 / DSM 1053 / JCM 10044 / NBRC 100330 / Delta H) (Methanobacterium thermoautotrophicum).